The following is a 256-amino-acid chain: 5-oxoprolinase subunit A 1 (256 aa).

It belongs to the LamB/PxpA family. As to quaternary structure, forms a complex composed of PxpA, PxpB and PxpC.

It carries out the reaction 5-oxo-L-proline + ATP + 2 H2O = L-glutamate + ADP + phosphate + H(+). Functionally, catalyzes the cleavage of 5-oxoproline to form L-glutamate coupled to the hydrolysis of ATP to ADP and inorganic phosphate. The chain is 5-oxoprolinase subunit A 1 from Pseudomonas syringae pv. tomato (strain ATCC BAA-871 / DC3000).